Reading from the N-terminus, the 262-residue chain is 14-3-3-like protein GF14-E (262 aa).

Belongs to the 14-3-3 family. As to expression, ubiquitous.

The protein localises to the cytoplasm. Its subcellular location is the nucleus. Is associated with a DNA binding complex that binds to the G box, a well-characterized cis-acting DNA regulatory element found in plant genes. This Oryza sativa subsp. japonica (Rice) protein is 14-3-3-like protein GF14-E (GF14E).